Consider the following 424-residue polypeptide: CinA-like protein (424 aa).

Belongs to the CinA family.

The protein is CinA-like protein of Prochlorococcus marinus (strain MIT 9215).